Consider the following 102-residue polypeptide: Putative toxin YafQ (102 aa).

This sequence belongs to the RelE toxin family. YafQ subfamily.

Its function is as follows. Toxic component of a type II toxin-antitoxin (TA) system. Its cognate antitoxin is RelB. This is Putative toxin YafQ from Haemophilus influenzae (strain ATCC 51907 / DSM 11121 / KW20 / Rd).